The chain runs to 488 residues: HSPB1-associated protein 1 (488 aa).

The interval 88-208 (ETTCNYVEAT…EDTPFLYPTR (121 aa)) is interaction with HSPB1. One can recognise a JmjC domain in the interval 124–288 (WAYADYKYFV…HLARVEEAIT (165 aa)). The span at 369 to 379 (QTGSQNLTTGT) shows a compositional bias: polar residues. Residues 369–415 (QTGSQNLTTGTDKPEAASPFGPDLVPVAQRSEEPPSERGGIFGSDGK) form a disordered region.

As to quaternary structure, interacts with CRYAB and HSPB1. In terms of tissue distribution, widely expressed.

The protein localises to the cytoplasm. May play a role in cellular stress response. The polypeptide is HSPB1-associated protein 1 (HSPBAP1) (Homo sapiens (Human)).